Consider the following 368-residue polypeptide: Probable dual-specificity RNA methyltransferase RlmN (368 aa).

The Proton acceptor role is filled by Glu111. Residues 117–355 enclose the Radical SAM core domain; sequence YPNRATLCIS…CTVRDTRGQE (239 aa). Cys124 and Cys360 are disulfide-bonded. Cys131, Cys135, and Cys138 together coordinate [4Fe-4S] cluster. Residues 181–182, Ser215, 238–240, and Asn317 contribute to the S-adenosyl-L-methionine site; these read GE and SLH. Cys360 functions as the S-methylcysteine intermediate in the catalytic mechanism.

This sequence belongs to the radical SAM superfamily. RlmN family. Requires [4Fe-4S] cluster as cofactor.

The protein localises to the cytoplasm. It carries out the reaction adenosine(2503) in 23S rRNA + 2 reduced [2Fe-2S]-[ferredoxin] + 2 S-adenosyl-L-methionine = 2-methyladenosine(2503) in 23S rRNA + 5'-deoxyadenosine + L-methionine + 2 oxidized [2Fe-2S]-[ferredoxin] + S-adenosyl-L-homocysteine. The catalysed reaction is adenosine(37) in tRNA + 2 reduced [2Fe-2S]-[ferredoxin] + 2 S-adenosyl-L-methionine = 2-methyladenosine(37) in tRNA + 5'-deoxyadenosine + L-methionine + 2 oxidized [2Fe-2S]-[ferredoxin] + S-adenosyl-L-homocysteine. Its function is as follows. Specifically methylates position 2 of adenine 2503 in 23S rRNA and position 2 of adenine 37 in tRNAs. The sequence is that of Probable dual-specificity RNA methyltransferase RlmN from Corynebacterium diphtheriae (strain ATCC 700971 / NCTC 13129 / Biotype gravis).